A 153-amino-acid chain; its full sequence is MRPIPALALTFSLVAMPALAQDARQIERMIEGRHGLMTLMAHELGKLGGMAKEETPYDAEVAGKAASNLSALASVISPELFPKGSAVGEAEDSEALPAIWEKPDDFAQKISGMEEAAAKMQAAAGTDLASLQGAMRDLGAACGSCHETYRQKD.

An N-terminal signal peptide occupies residues M1–A20. Q21 carries the post-translational modification Pyrrolidone carboxylic acid. 4 residues coordinate heme c: M37, C142, C145, and H146.

Binds 1 heme c group covalently per subunit.

The protein resides in the periplasm. Monoheme c-type cytochrome, that is particularly expressed when cells generate energy via aerobic respiration. This Cereibacter sphaeroides (strain ATCC 17023 / DSM 158 / JCM 6121 / CCUG 31486 / LMG 2827 / NBRC 12203 / NCIMB 8253 / ATH 2.4.1.) (Rhodobacter sphaeroides) protein is Cytochrome c-554 (cycF).